Reading from the N-terminus, the 223-residue chain is Large ribosomal subunit protein bL25 (223 aa).

It belongs to the bacterial ribosomal protein bL25 family. CTC subfamily. As to quaternary structure, part of the 50S ribosomal subunit; part of the 5S rRNA/L5/L18/L25 subcomplex. Contacts the 5S rRNA. Binds to the 5S rRNA independently of L5 and L18.

In terms of biological role, this is one of the proteins that binds to the 5S RNA in the ribosome where it forms part of the central protuberance. This Albidiferax ferrireducens (strain ATCC BAA-621 / DSM 15236 / T118) (Rhodoferax ferrireducens) protein is Large ribosomal subunit protein bL25.